The following is a 279-amino-acid chain: Movement protein (279 aa).

The span at 256–266 (PPIAIGSPSAS) shows a compositional bias: low complexity. The tract at residues 256–279 (PPIAIGSPSASRNNSFRSQVVNGL) is disordered. Polar residues predominate over residues 267-279 (RNNSFRSQVVNGL).

This sequence belongs to the cucumovirus movement protein family.

It localises to the host cell junction. Its subcellular location is the host plasmodesma. Transports viral genome to neighboring plant cells directly through plasmosdesmata, without any budding. The movement protein allows efficient cell to cell propagation, by bypassing the host cell wall barrier. Acts by forming a tubular structure at the host plasmodesmata, enlarging it enough to allow free passage of virion capsids. The protein is Movement protein of Cucumis sativus (Cucumber).